A 57-amino-acid chain; its full sequence is uncharacterized protein (57 aa).

The helical transmembrane segment at leucine 24–isoleucine 44 threads the bilayer.

This sequence to cation A.eutrophus efflux system protein CzcD.

Its subcellular location is the cell membrane. This is an uncharacterized protein from Bacillus caldolyticus.